Here is a 277-residue protein sequence, read N- to C-terminus: Probable cyclic nucleotide phosphodiesterase MCR_0369 (277 aa).

Residues Asp-17, His-19, Asp-53, Asn-83, His-165, His-204, and His-206 each coordinate Fe cation. Residues His-19, Asp-53, and 83-84 (NH) contribute to the AMP site. His-206 contributes to the AMP binding site.

The protein belongs to the cyclic nucleotide phosphodiesterase class-III family. Fe(2+) is required as a cofactor.

The protein is Probable cyclic nucleotide phosphodiesterase MCR_0369 of Moraxella catarrhalis (strain BBH18).